The chain runs to 543 residues: Myotubularin-related protein 9-like (543 aa).

The 379-residue stretch at Ala-124–Phe-502 folds into the Myotubularin phosphatase domain.

Belongs to the protein-tyrosine phosphatase family. Non-receptor class myotubularin subfamily.

Its function is as follows. Probable pseudophosphatase. This chain is Myotubularin-related protein 9-like, found in Bos taurus (Bovine).